A 100-amino-acid polypeptide reads, in one-letter code: Small ribosomal subunit protein uS14c (100 aa).

Belongs to the universal ribosomal protein uS14 family. In terms of assembly, part of the 30S ribosomal subunit.

The protein localises to the plastid. Its subcellular location is the chloroplast. Its function is as follows. Binds 16S rRNA, required for the assembly of 30S particles. The chain is Small ribosomal subunit protein uS14c from Adiantum capillus-veneris (Maidenhair fern).